The primary structure comprises 200 residues: Beta-1,6-glucan synthesis-associated protein KEG1 (200 aa).

The Lumenal segment spans residues Met-1–Gln-15. The helical transmembrane segment at Leu-16–Val-36 threads the bilayer. The Cytoplasmic portion of the chain corresponds to Gly-37 to Gly-44. The helical transmembrane segment at Ile-45–Leu-65 threads the bilayer. Topologically, residues Arg-66–Asp-82 are lumenal. The helical transmembrane segment at Leu-83 to Ile-103 threads the bilayer. Residues Leu-104–Thr-145 are Cytoplasmic-facing. Residues Phe-146–Val-166 form a helical membrane-spanning segment. Residues Lys-167–Pro-173 lie on the Lumenal side of the membrane. Residues Thr-174 to Tyr-194 traverse the membrane as a helical segment. Residues Lys-195–Lys-200 are Cytoplasmic-facing.

Interacts with KRE6.

Its subcellular location is the endoplasmic reticulum membrane. In terms of biological role, involved in the biosynthesis of (1-&gt;6)-beta-D-glucan polymers of the cell wall. Required for viability. Involved in maintaining chromosome stability. The polypeptide is Beta-1,6-glucan synthesis-associated protein KEG1 (KEG1) (Saccharomyces cerevisiae (strain ATCC 204508 / S288c) (Baker's yeast)).